A 386-amino-acid chain; its full sequence is Palmitoyltransferase ZDHHC9 (386 aa).

Residues 1–35 (MSAVMITRKITRKWEKLPGKNTFCCDGRVMMARQK) are Cytoplasmic-facing. The chain crosses the membrane as a helical span at residues 36 to 56 (GVFYLTLFLIVGTCSLFFAFE). Over 57–63 (CPYLAVH) the chain is Lumenal. A helical membrane pass occupies residues 64–84 (LSPAIPVFAVLLFVFVMAMLL). The Cytoplasmic segment spans residues 85 to 183 (RTSFSDPGVL…NCVGKRNYRY (99 aa)). In terms of domain architecture, DHHC spans 139–189 (KYCYTCKIFRPPRASHCSICDNCVDRFDHHCPWVGNCVGKRNYRYFYLFTL). Cys-169 (S-palmitoyl cysteine intermediate) is an active-site residue. A helical transmembrane segment spans residues 184–204 (FYLFTLSLSLLTIYIFAFDIV). At 205–224 (HVVLRSVDSGFVNTLKETPG) the chain is on the lumenal side. The helical transmembrane segment at 225–245 (TVLEVLVCFFTLWSVVGLTGF) threads the bilayer. The Cytoplasmic portion of the chain corresponds to 246–386 (HTYLISLNQT…APAVIKESTH (141 aa)). Residues 306-334 (SCSSAPSNGATTVPVNKSSNPATQTTKSS) show a composition bias toward polar residues. The interval 306-386 (SCSSAPSNGA…APAVIKESTH (81 aa)) is disordered.

It belongs to the DHHC palmitoyltransferase family. ERF2/ZDHHC9 subfamily.

The protein resides in the endoplasmic reticulum membrane. The protein localises to the golgi apparatus membrane. The enzyme catalyses L-cysteinyl-[protein] + hexadecanoyl-CoA = S-hexadecanoyl-L-cysteinyl-[protein] + CoA. Palmitoyltransferase that catalyzes the addition of palmitate onto various protein substrates, such as ADRB2, GSDMD, HRAS, NRAS and CGAS. This Danio rerio (Zebrafish) protein is Palmitoyltransferase ZDHHC9.